A 488-amino-acid polypeptide reads, in one-letter code: MATLESLTFDNGFARLPETYYARVCPTPVPDPYLVCYSPEALSLLDLDATELKRPETIETLAGNRLLPGMDAIAALYAGHQFGHYVPQLGDGRAILLGEVRNRAGEGWEIQLKGAGRTPYSRGGDGRAVLRSSIREFLCSEAMHALDIPTTRALAVVGSDHPVYREDEETAALVTRLAPSFVRFGSFEVFYYRNQVEPIRHLADYVIARYYPELKTLADPYPEFLRQVSLRTAELMAQWQAVGFSHGVMNTDNMSILGLTLDYGPFGFLDAFDPGFVCNHSDTGGRYAFDQQPDVAAWNLTKLAQALVPLMSVETASQAISEYPQAFGRAYLARMAAKFGLAPGDDTVPLITDALQLLAGNRVDYTIFLRKLCAFDSQADAGNAPLRDLFLDRAAFDAWAVRYGAALRQHGQPDAERAATMRTRNPKYILRNYLAENAIRRAADLRDYSEVERLHRLLARPFDEQPAFEAYAAEPPDWAKRIEVSCSS.

ATP is bound by residues G90, G92, R93, K113, D125, G126, R176, and R183. The active-site Proton acceptor is D252. Mg(2+)-binding residues include N253 and D262. D262 provides a ligand contact to ATP.

The protein belongs to the SELO family. The cofactor is Mg(2+). Mn(2+) is required as a cofactor.

It catalyses the reaction L-seryl-[protein] + ATP = 3-O-(5'-adenylyl)-L-seryl-[protein] + diphosphate. The catalysed reaction is L-threonyl-[protein] + ATP = 3-O-(5'-adenylyl)-L-threonyl-[protein] + diphosphate. The enzyme catalyses L-tyrosyl-[protein] + ATP = O-(5'-adenylyl)-L-tyrosyl-[protein] + diphosphate. It carries out the reaction L-histidyl-[protein] + UTP = N(tele)-(5'-uridylyl)-L-histidyl-[protein] + diphosphate. It catalyses the reaction L-seryl-[protein] + UTP = O-(5'-uridylyl)-L-seryl-[protein] + diphosphate. The catalysed reaction is L-tyrosyl-[protein] + UTP = O-(5'-uridylyl)-L-tyrosyl-[protein] + diphosphate. In terms of biological role, nucleotidyltransferase involved in the post-translational modification of proteins. It can catalyze the addition of adenosine monophosphate (AMP) or uridine monophosphate (UMP) to a protein, resulting in modifications known as AMPylation and UMPylation. This chain is Protein nucleotidyltransferase YdiU, found in Thiobacillus denitrificans (strain ATCC 25259 / T1).